Here is a 768-residue protein sequence, read N- to C-terminus: Ral guanine nucleotide dissociation stimulator-like 1 (768 aa).

Positions 65–196 (KIRTIKAGTL…RAQNLLEQFQ (132 aa)) constitute an N-terminal Ras-GEF domain. In terms of domain architecture, Ras-GEF spans 232–501 (SEDLVAEQLT…YALSCEIEAA (270 aa)). Serine 520 bears the Phosphoserine mark. Residues 528 to 623 (MITSPTPTKE…PPSCNNNPKI (96 aa)) form a disordered region. Composition is skewed to low complexity over residues 541 to 561 (STAS…SCES), 586 to 596 (ESSSSCSSIHS), and 605 to 621 (SSLI…NNNP). The Ras-associating domain maps to 648–735 (DTCIIRISVE…FDFILRKKNS (88 aa)).

Interacts with Ras. In terms of tissue distribution, expressed in a wide variety of tissues with strong expression being seen in the heart, brain, kidney, spleen and testis.

In terms of biological role, probable guanine nucleotide exchange factor. The chain is Ral guanine nucleotide dissociation stimulator-like 1 (RGL1) from Homo sapiens (Human).